The sequence spans 757 residues: RNA-directed RNA polymerase catalytic subunit (757 aa).

The interval 53 to 82 (GRWTKNTETGAPQLNPIDGPLPKDNEPSGY) is disordered. Short sequence motifs (nuclear localization signal) lie at residues 187-195 (RKRRVRDNV) and 203-216 (RTIG…NKRS). Positions 249 to 256 (RGFVYFVE) are promoter-binding site. The RdRp catalytic domain occupies 286-483 (VRKMMTNSQD…GINMSKKKSY (198 aa)).

Belongs to the influenza viruses polymerase PB1 family. As to quaternary structure, influenza RNA polymerase is composed of three subunits: PB1, PB2 and PA. Interacts (via N-terminus) with PA (via C-terminus). Interacts (via C-terminus) with PB2 (via N-terminus); this interaction is essential for transcription initiation. Interacts (via C-terminus) with human PKP2 (via N-terminus); the interaction competitively inhibits the interaction between the RNA polymerase subunits PB1 and PB2. Phosphorylated by host PRKCA.

It localises to the host nucleus. The protein resides in the host cytoplasm. The catalysed reaction is RNA(n) + a ribonucleoside 5'-triphosphate = RNA(n+1) + diphosphate. Its function is as follows. RNA-dependent RNA polymerase which is responsible for replication and transcription of virus RNA segments. The transcription of viral mRNAs occurs by a unique mechanism called cap-snatching. 5' methylated caps of cellular mRNAs are cleaved after 10-13 nucleotides by PA. In turn, these short capped RNAs are used as primers by PB1 for transcription of viral mRNAs. During virus replication, PB1 initiates RNA synthesis and copy vRNA into complementary RNA (cRNA) which in turn serves as a template for the production of more vRNAs. The protein is RNA-directed RNA polymerase catalytic subunit of Influenza A virus (strain A/Brazil/11/1978 H1N1).